The primary structure comprises 85 residues: Large ribosomal subunit protein bL27 (85 aa).

The segment at 1–22 is disordered; the sequence is MAHKKAGGSTNNGRDSESKRLG.

The protein belongs to the bacterial ribosomal protein bL27 family.

The chain is Large ribosomal subunit protein bL27 from Photobacterium profundum (strain SS9).